Here is a 497-residue protein sequence, read N- to C-terminus: Aldehyde dehydrogenase (497 aa).

241–246 (GSTLVG) serves as a coordination point for NAD(+). Glu264 functions as the Proton acceptor in the catalytic mechanism. Residue Cys298 is the Nucleophile of the active site.

This sequence belongs to the aldehyde dehydrogenase family.

The enzyme catalyses an aldehyde + NAD(+) + H2O = a carboxylate + NADH + 2 H(+). It participates in alcohol metabolism; ethanol degradation; acetate from ethanol: step 2/2. The sequence is that of Aldehyde dehydrogenase (aldA) from Emericella nidulans (strain FGSC A4 / ATCC 38163 / CBS 112.46 / NRRL 194 / M139) (Aspergillus nidulans).